We begin with the raw amino-acid sequence, 400 residues long: Aspartate/prephenate aminotransferase (400 aa).

G39, W125, and N175 together coordinate L-aspartate. K239 carries the post-translational modification N6-(pyridoxal phosphate)lysine. Residue R375 participates in L-aspartate binding.

It belongs to the class-I pyridoxal-phosphate-dependent aminotransferase family. Homodimer. Pyridoxal 5'-phosphate serves as cofactor.

The protein resides in the cytoplasm. It catalyses the reaction L-aspartate + 2-oxoglutarate = oxaloacetate + L-glutamate. The catalysed reaction is L-arogenate + 2-oxoglutarate = prephenate + L-glutamate. In terms of biological role, catalyzes the reversible conversion of aspartate and 2-oxoglutarate to glutamate and oxaloacetate. Can also transaminate prephenate in the presence of glutamate. Required for symbiotic nitrogen fixation. This chain is Aspartate/prephenate aminotransferase, found in Rhizobium meliloti (strain 1021) (Ensifer meliloti).